A 427-amino-acid polypeptide reads, in one-letter code: MSEFWLISAPGDKENLQALERMNNVTSKSNLSHNTKFAIPDFKVGTLDSLVGLSDELGKLDTFAESLIKRMAQSVVEVMEDSKGKAHETLLANGVDLTSFVTHFEWDMAKYPAKQPLVSVVDTLAKQLAQIETDLKSRTAAYSVLKANLENLEKRSTGNLFTRTLSDIVSKEDFVLDSEYLITLLVIVPKSSFAQWQKTYESLSDMVVPRSTKLIAEDNEGGLFTVTLFRKVIEDFKVKAKENKFIVREFYYDEKEIKREREEMTRLLSDKKQQYPTSCVALKKGSATYRDHKVKVAPLGNPARPAAGQTDRDRESEGEGEGPLLRWLKVNFSEAFIAWIHIKALRVFVESVLRYGLPVNFQAVLLQPHKKSATKRLREVLNSVFRHLDEVAAASILDASVEIPGLQLSNQDYFPYVYFHIDLSLLD.

The segment at 298–320 (PLGNPARPAAGQTDRDRESEGEG) is disordered.

The protein belongs to the V-ATPase C subunit family. As to quaternary structure, V-ATPase is a heteromultimeric enzyme made up of two complexes: the ATP-hydrolytic V1 complex and the proton translocation V0 complex. The V1 complex consists of three catalytic AB heterodimers that form a heterohexamer, three peripheral stalks each consisting of EG heterodimers, one central rotor including subunits D and F, and the regulatory subunits C and H. The proton translocation complex V0 consists of the proton transport subunit a, a ring of proteolipid subunits c9c'', rotary subunit d, subunits e and f, and the accessory subunits ATP6AP1/Ac45 and ATP6AP2/PRR. Predominantly expressed in the lung and kidney. Isoform 1 is lung-specific while isoform 3 is a kidney-specific isoform. Isoform 1 is localized in the lamellar bodies of type II alveolar cells. Isoform 2 is strongly expressed in the cortical and medulla collecting ducts and is found in the plasma membranes of renal alpha and beta intercalated cells.

Subunit of the V1 complex of vacuolar(H+)-ATPase (V-ATPase), a multisubunit enzyme composed of a peripheral complex (V1) that hydrolyzes ATP and a membrane integral complex (V0) that translocates protons. V-ATPase is responsible for acidifying and maintaining the pH of intracellular compartments and in some cell types, is targeted to the plasma membrane, where it is responsible for acidifying the extracellular environment. Subunit C is necessary for the assembly of the catalytic sector of the enzyme and is likely to have a specific function in its catalytic activity. The chain is V-type proton ATPase subunit C 2 (Atp6v1c2) from Mus musculus (Mouse).